The following is a 775-amino-acid chain: Tumor necrosis factor alpha-induced protein 3 (775 aa).

Position 2 is an N-acetylalanine (Ala2). The tract at residues 58–300 (PQFREIIHKA…LTDPENEMKE (243 aa)) is TRAF-binding. One can recognise an OTU domain in the interval 92 to 263 (LVALKTNGDG…SQHFVPLVTL (172 aa)). Residue Asp100 is part of the active site. Cys103 serves as the catalytic Nucleophile. Interaction with ubiquitin regions lie at residues 157-159 (LCY), 190-192 (SLE), and 224-227 (FAPL). The active-site Proton acceptor is the His256. The tract at residues 369 to 775 (AQNPLEPSTP…ECYQFKQMYG (407 aa)) is interaction with TNIP1. The A20-type 1 zinc finger occupies 381-416 (SLMDIKCETPNCPFFMSVNTQPLCHECSERRQKNQS). The interval 386–445 (KCETPNCPFFMSVNTQPLCHECSERRQKNQSKLPKLNSKLGPEGLPGVGLGSSNWSPEET) is interaction with RIPK1. Zn(2+) contacts are provided by Cys387, Cys392, Cys404, and Cys407. The disordered stretch occupies residues 415–455 (QSKLPKLNSKLGPEGLPGVGLGSSNWSPEETAGGPHSAPPT). Ser451 carries the post-translational modification Phosphoserine. 2 consecutive A20-type zinc fingers follow at residues 464 to 499 (ETTA…NASH) and 500 to 533 (TADP…AEPS). Residues Cys470, Cys475, Cys487, Cys490, Cys506, Cys509, Cys521, and Cys524 each contribute to the Zn(2+) site. Residues 567–580 (TGNVSPSGCLSQAA) show a composition bias toward polar residues. The disordered stretch occupies residues 567 to 590 (TGNVSPSGCLSQAARTPGDRAGTS). 4 A20-type zinc fingers span residues 586-621 (RAGT…ENKQ), 636-671 (FQNN…NQRF), 695-730 (VASR…RVGS), and 741-775 (EPPK…QMYG). A required for proteasomal degradation of UBE2N and UBE2D3, TRAF6 deubiquitination, and TAX1BP1 interaction with UBE2N region spans residues 590-640 (SKCRKAGCMYFGTPENKGFCTLCFIEYRENKQSVTASEKAGSPAPRFQNNV). A sufficient for inhibitory activity of TNF-induced NF-kappa-B activity region spans residues 591–775 (KCRKAGCMYF…ECYQFKQMYG (185 aa)). Residues Cys592, Cys597, Cys609, Cys612, Cys642, Cys647, Cys659, Cys662, Cys701, Cys706, Cys718, Cys721, Cys747, Cys752, Cys764, and Cys767 each coordinate Zn(2+). The required for lysosomal localization and for TRAF2 lysosomal degradation stretch occupies residues 682–775 (RSSQHRDMPR…ECYQFKQMYG (94 aa)).

Belongs to the peptidase C64 family. Homodimer. Interacts with TNIP1, TAX1BP1 and TRAF2. Interacts with RNF11, ITCH and TAX1BP1 only after TNF stimulation; these interaction are transient and they are lost after 1 hour of stimulation with TNF. Interacts with YWHAZ and YWHAH. Interacts with IKBKG; the interaction is induced by TNF stimulation and by polyubiquitin. Interacts with RIPK1. Interacts with UBE2N; the interaction requires TAX1BP1. Interacts with TRAF6. As to expression, found in most tissues during development. Strikingly high levels are found in lymphoid organs, including the thymus, spleen, and gut-associated lymphoid tissue. Constitutively expressed in immature and mature thymocyte subpopulations as well as in resting peripheral T-cells; activation of these leads to down-regulation.

The protein resides in the cytoplasm. Its subcellular location is the nucleus. It is found in the lysosome. It catalyses the reaction Thiol-dependent hydrolysis of ester, thioester, amide, peptide and isopeptide bonds formed by the C-terminal Gly of ubiquitin (a 76-residue protein attached to proteins as an intracellular targeting signal).. Its function is as follows. Ubiquitin-editing enzyme that contains both ubiquitin ligase and deubiquitinase activities. Involved in immune and inflammatory responses signaled by cytokines, such as TNF-alpha and IL-1 beta, or pathogens via Toll-like receptors (TLRs) through terminating NF-kappa-B activity. Essential component of a ubiquitin-editing protein complex, comprising also RNF11, ITCH and TAX1BP1, that ensures the transient nature of inflammatory signaling pathways. In cooperation with TAX1BP1 promotes disassembly of E2-E3 ubiquitin protein ligase complexes in IL-1R and TNFR-1 pathways; affected are at least E3 ligases TRAF6, TRAF2 and BIRC2, and E2 ubiquitin-conjugating enzymes UBE2N and UBE2D3. In cooperation with TAX1BP1 promotes ubiquitination of UBE2N and proteasomal degradation of UBE2N and UBE2D3. Upon TNF stimulation, deubiquitinates 'Lys-63'-polyubiquitin chains on RIPK1 and catalyzes the formation of 'Lys-48'-polyubiquitin chains. This leads to RIPK1 proteasomal degradation and consequently termination of the TNF- or LPS-mediated activation of NF-kappa-B. Deubiquitinates TRAF6 probably acting on 'Lys-63'-linked polyubiquitin. Upon T-cell receptor (TCR)-mediated T-cell activation, deubiquitinates 'Lys-63'-polyubiquitin chains on MALT1 thereby mediating disassociation of the CBM (CARD11:BCL10:MALT1) and IKK complexes and preventing sustained IKK activation. Deubiquitinates NEMO/IKBKG; the function is facilitated by TNIP1 and leads to inhibition of NF-kappa-B activation. Upon stimulation by bacterial peptidoglycans, probably deubiquitinates RIPK2. Can also inhibit I-kappa-B-kinase (IKK) through a non-catalytic mechanism which involves polyubiquitin; polyubiquitin promotes association with IKBKG and prevents IKK MAP3K7-mediated phosphorylation. Targets TRAF2 for lysosomal degradation. In vitro able to deubiquitinate 'Lys-11'-, 'Lys-48'- and 'Lys-63' polyubiquitin chains. Inhibitor of programmed cell death. Has a role in the function of the lymphoid system. Required for LPS-induced production of pro-inflammatory cytokines and IFN beta in LPS-tolerized macrophages. The sequence is that of Tumor necrosis factor alpha-induced protein 3 (Tnfaip3) from Mus musculus (Mouse).